Here is a 99-residue protein sequence, read N- to C-terminus: Beta-2-microglobulin (99 aa).

One can recognise an Ig-like C1-type domain in the interval 5–92 (PNVQVYSRHP…KHVTLKEPMT (88 aa)). The cysteines at positions 25 and 80 are disulfide-linked.

The protein belongs to the beta-2-microglobulin family. In terms of assembly, heterodimer of an alpha chain and a beta chain. Beta-2-microglobulin is the beta-chain of major histocompatibility complex class I molecules.

The protein resides in the secreted. Component of the class I major histocompatibility complex (MHC). Involved in the presentation of peptide antigens to the immune system. This Oryctolagus cuniculus (Rabbit) protein is Beta-2-microglobulin (B2M).